Reading from the N-terminus, the 447-residue chain is Protein odr-4 homolog (447 aa).

2 consecutive transmembrane segments (helical) span residues 82–102 (MLPG…ELAD) and 425–445 (IGVI…FHYF).

Belongs to the ODR-4 family. Ubiquitously expressed.

It localises to the membrane. Its function is as follows. May play a role in the trafficking of a subset of G-protein coupled receptors. This chain is Protein odr-4 homolog (Odr4), found in Mus musculus (Mouse).